Consider the following 308-residue polypeptide: Protein FdhE homolog (308 aa).

The protein belongs to the FdhE family.

It is found in the cytoplasm. Its function is as follows. Necessary for formate dehydrogenase activity. This is Protein FdhE homolog from Edwardsiella ictaluri (strain 93-146).